Consider the following 376-residue polypeptide: MAQKQKCVAMLLAGGKGSRLSALTKNLAKPAVPFGGKYRIIDFTLSNCANSGIETVGILTQYQPLELHNYIGIGNAWDLDRVSGGVTVLPPYAESSGVKWYTGTASAIYQNLNYLSQYEPEYVLILSGDHIYKMDYSKMLDYHIEKEADVSISVIEVPWDEASRFGIMNTNEEMEIVEFEEKPQFPRSNLASMGIYIFNWAILKEYLEMDARNPESSNDFGKDVLPLLLDEGKKLMAYPFEGYWKDVGTVKSLWEANMDLLRDETSLNLNDRDWRIYSVNPNEPPQYIAEKARVEESLINEGCVIEGDVKHSVLFQGVTVEEGSMVIDSVVMPGAKIGKNVVIERAIVGSEMVIEDGTIIRPEKNVDDVVLIAEGK.

Residues Y101, G166, 181–182 (EK), and S192 contribute to the alpha-D-glucose 1-phosphate site.

Belongs to the bacterial/plant glucose-1-phosphate adenylyltransferase family. In terms of assembly, homotetramer.

It catalyses the reaction alpha-D-glucose 1-phosphate + ATP + H(+) = ADP-alpha-D-glucose + diphosphate. Its pathway is glycan biosynthesis; glycogen biosynthesis. Functionally, involved in the biosynthesis of ADP-glucose, a building block required for the elongation reactions to produce glycogen. Catalyzes the reaction between ATP and alpha-D-glucose 1-phosphate (G1P) to produce pyrophosphate and ADP-Glc. In Bacillus cereus (strain Q1), this protein is Glucose-1-phosphate adenylyltransferase.